The chain runs to 253 residues: uncharacterized protein (253 aa).

Positions 211–241 are disordered; the sequence is TTRRKRYREDRDSGEDLGAESKRGNGSVRYT.

This is an uncharacterized protein from Ictalurid herpesvirus 1 (strain Auburn) (IcHV-1).